A 63-amino-acid polypeptide reads, in one-letter code: Large ribosomal subunit protein uL29 (63 aa).

It belongs to the universal ribosomal protein uL29 family.

This chain is Large ribosomal subunit protein uL29, found in Sulfurovum sp. (strain NBC37-1).